A 185-amino-acid polypeptide reads, in one-letter code: Calcium and integrin-binding family member 4 (185 aa).

EF-hand domains are found at residues 62 to 95 (RVNP…FSEQ), 97 to 132 (CPSL…LLKS), and 138 to 174 (DLLM…SPDF). The Ca(2+) site is built by aspartate 110, asparagine 112, asparagine 114, and aspartate 121.

Interacts with ITGA2B (via C-terminus cytoplasmic tail region); the interaction is stabilized/increased in a calcium- and magnesium-dependent manner. In terms of tissue distribution, expressed weakly in megakaryocytes and endothelial cells.

This chain is Calcium and integrin-binding family member 4 (Cib4), found in Mus musculus (Mouse).